We begin with the raw amino-acid sequence, 427 residues long: Glutamate-1-semialdehyde 2,1-aminomutase (427 aa).

Lys268 is subject to N6-(pyridoxal phosphate)lysine.

This sequence belongs to the class-III pyridoxal-phosphate-dependent aminotransferase family. HemL subfamily. It depends on pyridoxal 5'-phosphate as a cofactor.

Its subcellular location is the cytoplasm. It carries out the reaction (S)-4-amino-5-oxopentanoate = 5-aminolevulinate. It functions in the pathway porphyrin-containing compound metabolism; protoporphyrin-IX biosynthesis; 5-aminolevulinate from L-glutamyl-tRNA(Glu): step 2/2. This Methanococcus maripaludis (strain DSM 14266 / JCM 13030 / NBRC 101832 / S2 / LL) protein is Glutamate-1-semialdehyde 2,1-aminomutase.